The chain runs to 349 residues: MSDFQREQRKNEHVEIAMAQSDAMHSDFDKMRFVHHSIPSINVNDIDLTSQTPDLTMAYPIYINAMTGGSEWTKNINEKLAVVARETGLAMAVGSTHAALRNPRMAETFTIARKMNPEGMIFSNVGADVPVEKALEAVELLEAQALQIHVNSPQELVMPEGNREFVTWLDNIASIVSRVSVPVIIKEVGFGMSKELMHDLQQIGVKYVDVSGKGGTNFVDIENERRANKDMDYLSSWGQSTVESLLETTAYQSEISVFASGGLRTPLDAIKSLALGAKATGMSRPFLNQVENNGIAHTVAYVESFIEHMKSIMTMLDAKNIDDLTQKQIVFSPEIMSWIEQRSLNIHRG.

9 to 10 (RK) is a substrate binding site. FMN contacts are provided by residues 65–67 (AMT), Ser95, and Asn124. 95–97 (STH) is a binding site for substrate. Gln154 contacts substrate. Glu155 serves as a coordination point for Mg(2+). Residues Lys186, Ser211, Thr216, 262 to 264 (GLR), and 283 to 284 (SR) contribute to the FMN site.

Belongs to the IPP isomerase type 2 family. As to quaternary structure, homooctamer. Dimer of tetramers. The cofactor is FMN. Requires NADPH as cofactor. Mg(2+) is required as a cofactor.

The protein localises to the cytoplasm. It carries out the reaction isopentenyl diphosphate = dimethylallyl diphosphate. Its function is as follows. Involved in the biosynthesis of isoprenoids. Catalyzes the 1,3-allylic rearrangement of the homoallylic substrate isopentenyl (IPP) to its allylic isomer, dimethylallyl diphosphate (DMAPP). This chain is Isopentenyl-diphosphate delta-isomerase, found in Staphylococcus aureus (strain JH1).